The chain runs to 706 residues: MSTAVAEFKPSEKLLKTRNIGISAHIDSGKTTLTERILFYTNRIHAIHEVRGKDGVGAKMDSMDLERERGITIQSAATYCQWKNHTINIIDTPGHVDFTVEVERSLRVLDSAILVLCGVAGVQSQSITVDRQMRRYNVPRVAFINKLDRTGANPFRVIEQLKEKLKHNAVPVQIPIGLENDLKGIVDLVTMKAYYFEGKDGMDIQEKEIPDDLKELAQKKHEELLDAASMFSDELTEALLEGTPTEEMIKKAIRTGTIELKMTPVFMGSAFKNKGVQKLLDGVLDYLASPVDVKNKALDQNNNEEMIVLESNFEKPLVCLAFKLEDGRYGQLTYVRVYQGKLAKGMTIYNMSNNKKHNVGRLCRMHSDEMEDIDSAEAGDIIALFGIDCASGDTFTDGKLKVSMESMFVPAPVISLTIEAKESKHLNNLAKALNRFTKEDPTFQTHVDQESGQTIIKGMGELHLEVYIERMKREYGVELITGAPQVAYRETITSKADFDYTHKKQTGGQGQFGRVAGYMEPIPLEETLDYDFVNKVVGGAIPREYIQSVDKGFKSCLERGSLIGFPIIGVRCVINDGAYHDVDSSDMAFQIAGRYAFRQGFNKANPQILEPIMKVEVDGPSEFQGAILGSLNQRRGMILNTTEEDAYCKTEAEVPLADMFGYSTVLRSSTQGKAEFSMEFSRYAPVPRNVAEELMKKYKVNNKDED.

Residues 15–291 enclose the tr-type G domain; that stretch reads LKTRNIGISA…GVLDYLASPV (277 aa). Residues 24–31, 91–95, and 145–148 each bind GTP; these read AHIDSGKT, DTPGH, and NKLD.

It belongs to the TRAFAC class translation factor GTPase superfamily. Classic translation factor GTPase family. EF-G/EF-2 subfamily.

Its subcellular location is the cytoplasm. In terms of biological role, catalyzes the GTP-dependent ribosomal translocation step during translation elongation. During this step, the ribosome changes from the pre-translocational (PRE) to the post-translocational (POST) state as the newly formed A-site-bound peptidyl-tRNA and P-site-bound deacylated tRNA move to the P and E sites, respectively. Catalyzes the coordinated movement of the two tRNA molecules, the mRNA and conformational changes in the ribosome. The chain is Elongation factor G from Leptospira interrogans serogroup Icterohaemorrhagiae serovar copenhageni (strain Fiocruz L1-130).